A 323-amino-acid chain; its full sequence is Aquaporin-4 (323 aa).

Residues 1-36 (MSDGAAARRWGKCGHSCSRESIMVAFKGVWTQAFWK) lie on the Cytoplasmic side of the membrane. Residues Cys-13 and Cys-17 are each lipidated (S-palmitoyl cysteine). The helical transmembrane segment at 37 to 57 (AVSAEFLATLIFVLLGVGSTI) threads the bilayer. At 58-69 (NWGGSENPLPVD) the chain is on the extracellular side. A helical membrane pass occupies residues 70–89 (MVLISLCFGLSIATMVQCFG). Residues 90–93 (HISG) lie on the Cytoplasmic side of the membrane. The segment at residues 94 to 101 (GHINPAVT) is an intramembrane region (discontinuously helical). The NPA 1 signature appears at 97–99 (NPA). The Cytoplasmic segment spans residues 102-115 (VAMVCTRKISIAKS). Ser-111 is subject to Phosphoserine; by PKG. Residues 116 to 136 (VFYIIAQCLGAIIGAGILYLV) form a helical membrane-spanning segment. The Extracellular portion of the chain corresponds to 137–155 (TPPSVVGGLGVTTVHGNLT). Asn-153 is a glycosylation site (N-linked (GlcNAc...) asparagine). A helical membrane pass occupies residues 156–176 (AGHGLLVELIITFQLVFTIFA). Residues 177–184 (SCDSKRTD) are Cytoplasmic-facing. Position 180 is a phosphoserine; by PKC (Ser-180). A helical transmembrane segment spans residues 185 to 205 (VTGSIALAIGFSVAIGHLFAI). The N-linked (GlcNAc...) asparagine glycan is linked to Asn-206. The Extracellular portion of the chain corresponds to 206 to 208 (NYT). The discontinuously helical intramembrane region spans 209-222 (GASMNPARSFGPAV). An NPA 2 motif is present at residues 213 to 215 (NPA). Residues 223 to 231 (IMGNWANHW) lie on the Extracellular side of the membrane. The helical transmembrane segment at 232 to 252 (IYWVGPIMGAVLAGALYEYVF) threads the bilayer. Over 253-323 (CPDVELKRRL…DSSGEVLSSV (71 aa)) the chain is Cytoplasmic. Ser-276 and Ser-285 each carry phosphoserine. Position 289 is a phosphothreonine (Thr-289). Position 321 is a phosphoserine (Ser-321).

This sequence belongs to the MIP/aquaporin (TC 1.A.8) family. Homotetramer. The tetramers can form oligomeric arrays in membranes. The size of the oligomers differs between tissues and is smaller in skeletal muscle than in brain. Interaction between AQP4 oligomeric arrays in close-by cells can contribute to cell-cell adhesion. Part of a complex containing MLC1, TRPV4, HEPACAM and ATP1B1. Phosphorylation by PKC at Ser-180 reduces conductance by 50%. Phosphorylation by PKG at Ser-111 in response to glutamate increases conductance by 40%; this increase is not due to increased presence at the cell membrane. Post-translationally, isoform 2: Palmitoylated on its N-terminal region. Isoform 1: Not palmitoylated. As to expression, detected in brain cortex, especially around cortical blood vessels, and subjacent to pia, with lower levels in parenchymal membranes. Detected in ependymal and astroglial cells in brain. Detected in supporting Hensen's cells, inner sulcus cells and Claudius cells in the inner ear. Detected in skeletal muscle. Detected in gastric parietal cells. Detected in principal cells in collecting ducts in kidney medulla (at protein level). Detected in brain, heart and skeletal muscle.

The protein localises to the cell membrane. It localises to the basolateral cell membrane. The protein resides in the endosome membrane. Its subcellular location is the sarcolemma. It is found in the cell projection. It catalyses the reaction H2O(in) = H2O(out). In terms of biological role, forms a water-specific channel. Plays an important role in brain water homeostasis and in glymphatic solute transport. Required for a normal rate of water exchange across the blood brain interface. Required for normal levels of cerebrospinal fluid influx into the brain cortex and parenchyma along paravascular spaces that surround penetrating arteries, and for normal drainage of interstitial fluid along paravenous drainage pathways. Thereby, it is required for normal clearance of solutes from the brain interstitial fluid, including soluble beta-amyloid peptides derived from APP. Plays a redundant role in urinary water homeostasis and urinary concentrating ability. This chain is Aquaporin-4 (Aqp4), found in Mus musculus (Mouse).